Consider the following 221-residue polypeptide: Peptide methionine sulfoxide reductase MsrA (221 aa).

The active site involves cysteine 54.

Belongs to the MsrA Met sulfoxide reductase family.

It catalyses the reaction L-methionyl-[protein] + [thioredoxin]-disulfide + H2O = L-methionyl-(S)-S-oxide-[protein] + [thioredoxin]-dithiol. The enzyme catalyses [thioredoxin]-disulfide + L-methionine + H2O = L-methionine (S)-S-oxide + [thioredoxin]-dithiol. Functionally, has an important function as a repair enzyme for proteins that have been inactivated by oxidation. Catalyzes the reversible oxidation-reduction of methionine sulfoxide in proteins to methionine. This chain is Peptide methionine sulfoxide reductase MsrA, found in Methylobacterium sp. (strain 4-46).